Here is a 1091-residue protein sequence, read N- to C-terminus: Rho GTPase-activating protein 7 (1091 aa).

The region spanning 11 to 78 (LTQIEAKEAC…LNKCAVMKLE (68 aa)) is the SAM domain. A phosphoserine mark is found at Ser86, Ser89, and Ser320. The interval 273–447 (QLNCVEISAL…RLSIYDNVPG (175 aa)) is focal adhesion-targeting (FAT). Disordered stretches follow at residues 292 to 327 (VRKRSVSNSTQTSSSSSQSETSSAVSTPSPVTRTRS), 382 to 439 (PKAL…SSRL), and 491 to 553 (SDEG…GVGA). Low complexity-rich tracts occupy residues 297-323 (VSNSTQTSSSSSQSETSSAVSTPSPVT) and 386-400 (SNGSFPPSGNNSSVN). Positions 414–425 (LRRENSSDSPKE) are enriched in basic and acidic residues. The span at 499–511 (ALDSVSPCPSSPK) shows a compositional bias: polar residues. A compositionally biased stretch (basic and acidic residues) spans 513 to 523 (IHLDVDNDRAT). Positions 526–535 (DLDSTGNSLN) are enriched in polar residues. Residues 614–636 (KHGFSWAVPKFMKRIKVPDYKDR) are polybasic cluster (PBR). Residues 641–847 (VPLTVNVQRT…HMIAECKKLF (207 aa)) form the Rho-GAP domain. The START domain maps to 877–1084 (RNDESADYQH…RDSFSNQNTE (208 aa)).

In terms of assembly, interacts with EF1A1, facilitates EF1A1 distribution to the membrane periphery and ruffles upon growth factor stimulation and suppresses cell migration. Interacts with tensin TNS1 (via N-terminus); the interaction is decreased by phosphorylation of TNS1. Interacts with TNS3 and PTEN; in resting cells, interacts with TNS3 (via C2 tensin-type domain) but, following growth factor stimulation, TNS3 and PTEN are phosphorylated which leads to weakened interaction with TNS3 and enhanced interaction with PTEN. Interacts (via C-terminus) with tensin TNS4 (via SH2 domain); the interaction is independent of tyrosine phosphorylation of DLC1.

It is found in the cytoplasm. The protein resides in the cell junction. Its subcellular location is the focal adhesion. It localises to the membrane. In terms of biological role, functions as a GTPase-activating protein for the small GTPases RHOA, RHOB, RHOC and CDC42, terminating their downstream signaling. This induces morphological changes and detachment through cytoskeletal reorganization, playing a critical role in biological processes such as cell migration and proliferation. Also functions in vivo as an activator of the phospholipase PLCD1. Active DLC1 increases cell migration velocity but reduces directionality. Required for growth factor-induced epithelial cell migration; in resting cells, interacts with TNS3 while PTEN interacts with the p85 regulatory subunit of the PI3K kinase complex but growth factor stimulation induces phosphorylation of TNS3 and PTEN, causing them to change their binding preference so that PTEN interacts with DLC1 and TNS3 interacts with p85. The PTEN-DLC1 complex translocates to the posterior of migrating cells to activate RHOA while the TNS3-p85 complex translocates to the leading edge of migrating cells to promote RAC1 activation. In Canis lupus familiaris (Dog), this protein is Rho GTPase-activating protein 7 (DLC1).